A 59-amino-acid chain; its full sequence is Large ribosomal subunit protein uL30 (59 aa).

This sequence belongs to the universal ribosomal protein uL30 family. As to quaternary structure, part of the 50S ribosomal subunit.

This Leptospira biflexa serovar Patoc (strain Patoc 1 / ATCC 23582 / Paris) protein is Large ribosomal subunit protein uL30.